We begin with the raw amino-acid sequence, 138 residues long: Large ribosomal subunit protein uL16 (138 aa).

Belongs to the universal ribosomal protein uL16 family. As to quaternary structure, part of the 50S ribosomal subunit.

In terms of biological role, binds 23S rRNA and is also seen to make contacts with the A and possibly P site tRNAs. The chain is Large ribosomal subunit protein uL16 from Gluconacetobacter diazotrophicus (strain ATCC 49037 / DSM 5601 / CCUG 37298 / CIP 103539 / LMG 7603 / PAl5).